A 268-amino-acid polypeptide reads, in one-letter code: tRNA threonylcarbamoyladenosine dehydratase (268 aa).

The chain crosses the membrane as a helical span at residues 237–257 (GFGAATMVTATFGFVAVSHAL).

It belongs to the HesA/MoeB/ThiF family. Interacts with CsdE.

Its subcellular location is the membrane. Functionally, catalyzes the ATP-dependent dehydration of threonylcarbamoyladenosine at position 37 (t(6)A37) to form cyclic t(6)A37 (ct(6)A37) in tRNAs that read codons beginning with adenine. TcdA is also part of a sulfur transfer pathway; is able to accept sulfur from CsdA directly in vitro, but CsdE might act as the sulfur donor in vivo. The polypeptide is tRNA threonylcarbamoyladenosine dehydratase (tcdA) (Escherichia coli (strain K12)).